The sequence spans 332 residues: Tryptophan--tRNA ligase (332 aa).

ATP is bound by residues 11 to 13 (QPS) and 19 to 20 (GN). Residues 12–20 (PSGELTIGN) carry the 'HIGH' region motif. Asp-135 contributes to the L-tryptophan binding site. ATP contacts are provided by residues 147–149 (GQD), Val-186, and 195–199 (KMSKS). The short motif at 195-199 (KMSKS) is the 'KMSKS' region element.

Belongs to the class-I aminoacyl-tRNA synthetase family. As to quaternary structure, homodimer.

Its subcellular location is the cytoplasm. The catalysed reaction is tRNA(Trp) + L-tryptophan + ATP = L-tryptophyl-tRNA(Trp) + AMP + diphosphate + H(+). Functionally, catalyzes the attachment of tryptophan to tRNA(Trp). This Shewanella oneidensis (strain ATCC 700550 / JCM 31522 / CIP 106686 / LMG 19005 / NCIMB 14063 / MR-1) protein is Tryptophan--tRNA ligase.